A 400-amino-acid chain; its full sequence is Cytoplasmic tRNA 2-thiolation protein 2 (400 aa).

This sequence belongs to the CTU2/NCS2 family.

Its subcellular location is the cytoplasm. Its pathway is tRNA modification; 5-methoxycarbonylmethyl-2-thiouridine-tRNA biosynthesis. In terms of biological role, plays a central role in 2-thiolation of mcm(5)S(2)U at tRNA wobble positions of tRNA(Lys), tRNA(Glu) and tRNA(Gln). May act by forming a heterodimer with NCS6/CTU1 that ligates sulfur from thiocarboxylated URM1 onto the uridine of tRNAs at wobble position. This chain is Cytoplasmic tRNA 2-thiolation protein 2, found in Drosophila virilis (Fruit fly).